Consider the following 76-residue polypeptide: ATP synthase subunit c (76 aa).

Helical transmembrane passes span 8–28 (LLAAGLAMGLGAIGPGIGVGI) and 55–75 (VAFAESIAIFALVISIVLIFV).

It belongs to the ATPase C chain family. As to quaternary structure, F-type ATPases have 2 components, F(1) - the catalytic core - and F(0) - the membrane proton channel. F(1) has five subunits: alpha(3), beta(3), gamma(1), delta(1), epsilon(1). F(0) has three main subunits: a(1), b(2) and c(10-14). The alpha and beta chains form an alternating ring which encloses part of the gamma chain. F(1) is attached to F(0) by a central stalk formed by the gamma and epsilon chains, while a peripheral stalk is formed by the delta and b chains.

It localises to the cell membrane. Its function is as follows. F(1)F(0) ATP synthase produces ATP from ADP in the presence of a proton or sodium gradient. F-type ATPases consist of two structural domains, F(1) containing the extramembraneous catalytic core and F(0) containing the membrane proton channel, linked together by a central stalk and a peripheral stalk. During catalysis, ATP synthesis in the catalytic domain of F(1) is coupled via a rotary mechanism of the central stalk subunits to proton translocation. Functionally, key component of the F(0) channel; it plays a direct role in translocation across the membrane. A homomeric c-ring of between 10-14 subunits forms the central stalk rotor element with the F(1) delta and epsilon subunits. This is ATP synthase subunit c from Dehalococcoides mccartyi (strain ATCC BAA-2266 / KCTC 15142 / 195) (Dehalococcoides ethenogenes (strain 195)).